Reading from the N-terminus, the 225-residue chain is Urease accessory protein UreF (225 aa).

This sequence belongs to the UreF family. In terms of assembly, ureD, UreF and UreG form a complex that acts as a GTP-hydrolysis-dependent molecular chaperone, activating the urease apoprotein by helping to assemble the nickel containing metallocenter of UreC. The UreE protein probably delivers the nickel.

The protein resides in the cytoplasm. Functionally, required for maturation of urease via the functional incorporation of the urease nickel metallocenter. The polypeptide is Urease accessory protein UreF (Picosynechococcus sp. (strain ATCC 27264 / PCC 7002 / PR-6) (Agmenellum quadruplicatum)).